Here is a 556-residue protein sequence, read N- to C-terminus: MHLCNNQLLDHLDCNAVYRGYVSQENKVKRRKRLFNAIRKLWNERRRYRMPKDESISPTPISYSFRSLRRGHTSGHASEHTSSSRSSHDESDSMSSSSESDSDSVSSESNPKSYSDSSTSSARSSSTSGSISLYDDYYPAYSSNAPNTAISNYVSSGLSYYGNSSIIMNAVEYNQFFPLTITTLIVKNNKNVVSNLPKNVSFYFHSDNTVLLNEYYKSLSKLKNNFRGIIYKTTPYGSCNDTESLQVDTKGSVWFRDVSNMGSSGLIAFAPFDYCAPMHVLQAVQDRAKAILFYNASTASNSLTNFDHFEDAVDMITFETLPMALISYENGIAFEKILNEYSASSLNSVQDGGALVEYFGNIDATARLGVIISKEPKLLGLYIFIGVLLGLIGVIGLFICLHFSGAMNGFYRLLNRHGIPVQERIVNIGPNKPENRVTKEMLDTLPVRMFSGPHLANPNDELVYEKDWKLDKSESFDGQGNVVTTAERGSKYFDQRECTICLCEYSEESPLYRELPCHHIFHPACIDPYLLKNSDLCPLCKQSVTNMLENASEDNV.

The interval 69–129 (RRGHTSGHAS…SSARSSSTSG (61 aa)) is disordered. Low complexity-rich tracts occupy residues 74 to 85 (SGHASEHTSSSR) and 93 to 129 (SMSS…STSG). Residues 379–399 (LGLYIFIGVLLGLIGVIGLFI) traverse the membrane as a helical segment. Residues 498 to 541 (CTICLCEYSEESPLYRELPCHHIFHPACIDPYLLKNSDLCPLCK) form an RING-type; atypical zinc finger.

Its subcellular location is the vacuole membrane. The protein localises to the cell membrane. This is an uncharacterized protein from Schizosaccharomyces pombe (strain 972 / ATCC 24843) (Fission yeast).